A 111-amino-acid chain; its full sequence is MSDTAVDASVEKTTKDLKAKEKEVVEEAENGKDKPTNGKAENEENGEPEVDNEGDEEDEVDEEDEEDEVEGEDDDDDDEVEGVTGKRAAEDDEDDDDDDVEIKKQKTDEDD.

Residues Met-1–Asp-111 are disordered. The span at Ser-9 to Asn-42 shows a compositional bias: basic and acidic residues. 2 stretches are compositionally biased toward acidic residues: residues Glu-43–Glu-81 and Glu-90–Val-100. Residues Glu-101–Asp-111 show a composition bias toward basic and acidic residues.

The protein belongs to the pro/parathymosin family.

The protein localises to the nucleus. This is Prothymosin alpha-A (ptma-a) from Xenopus laevis (African clawed frog).